A 667-amino-acid polypeptide reads, in one-letter code: MIHELLLALSGYPGSIFTWNKRSGLQVSQDFPFLHPSETSVLNRLCRLGTDYIRFTEFIEQYTGHVQQQDHHPSQQGQGGLHGIYLRAFCTGLDSVLQPYRQALLDLEQEFLGDPHLSISHVNYFLDQFQLLFPSVMVVVEQIKSQKIHGCQILETVYKHSCGGLPPVRSALEKILAVCHGVMYKQLSAWMLHGLLLDQHEEFFIKQGPSSGNVSAQPEEDEEDLGIGGLTGKQLRELQDLRLIEEENMLAPSLKQFSLRVEILPSYIPVRVAEKILFVGESVQMFENQNVNLTRKGSILKNQEDTFAAELHRLKQQPLFSLVDFEQVVDRIRSTVAEHLWKLMVEESDLLGQLKIIKDFYLLGRGELFQAFIDTAQHMLKTPPTAVTEHDVNVAFQQSAHKVLLDDDNLLPLLHLTIEYHGKEHKADATQAREGPSRETSPREAPASGWAALGLSYKVQWPLHILFTPAVLEKYNVVFKYLLSVRRVQAELQHCWALQMQRKHLKSNQTDAIKWRLRNHMAFLVDNLQYYLQVDVLESQFSQLLHQINSTRDFESIRLAHDHFLSNLLAQSFILLKPVFHCLNEILDLCHSFCSLVSQNLGPLDERGAAQLSILVKGFSRQSSLLFKILSSVRNHQINSDLAQLLLRLDYNKYYTQAGGTLGSFGM.

Residues 425–445 are disordered; sequence HKADATQAREGPSRETSPREA.

This sequence belongs to the TUBGCP family. As to quaternary structure, component of the gamma-tubulin ring complex (gTuRC) consisting of TUBGCP2, TUBGCP3, TUBGCP4, TUBGCP5 and TUBGCP6 and gamma-tubulin TUBG1 or TUBG2. TUBGCP2, TUBGCP3, TUBGCP4, TUBGCP5 and TUBGCP6 assemble in a 5:5:2:1:1 stoichiometry; each is associated with a gamma-tubulin, thereby arranging 14 gamma-tubulins in a helical manner. Gamma-tubulin at the first position is blocked by TUBGCP3 at the last position, allowing 13 protafilaments to grow into a microtubule. The gTuRC (via TUBGCP3 and TUBGCP6) interacts with ACTB and MZT1; the interactions form a luminal bridge that stabilizes the initial structure during complex assembly. The gTuRC (via TUBGCP2) interacts with MZT2A/MZT2B and CDK5RAP2 (via CM1 motif); the interactions play a role in gTuRC activation. Interacts with NINL. Interacts with ATF5; the ATF5:PCNT:polyglutamylated tubulin (PGT) tripartite unites the mother centriole and the pericentriolar material (PCM) in the centrosome. Ubiquitously expressed.

It is found in the cytoplasm. The protein localises to the cytoskeleton. Its subcellular location is the microtubule organizing center. The protein resides in the centrosome. Functionally, component of the gamma-tubulin ring complex (gTuRC) which mediates microtubule nucleation. The gTuRC regulates the minus-end nucleation of alpha-beta tubulin heterodimers that grow into microtubule protafilaments, a critical step in centrosome duplication and spindle formation. The chain is Gamma-tubulin complex component 4 (TUBGCP4) from Homo sapiens (Human).